The sequence spans 199 residues: MKFSPLVDELIQSLKCLPGVGPKSAQRMAFQLLERDRKAGQTLAQALASAMSDVGHCRSCRTFTEESHCPICASNKRGQSEQICVVETPADVLAIEAGGHFSGRYFVLLGHLSPLDGVGPEELGLSLLEEHLCSGGVSELILATNPTVEGDATAHFIADMAKVHNVSVSRIAHGVPVGGELEYVDSTTLALSFNGRLPI.

The C4-type zinc finger occupies 57 to 72 (CRSCRTFTEESHCPIC). Positions 81-176 (EQICVVETPA…SVSRIAHGVP (96 aa)) constitute a Toprim domain.

Belongs to the RecR family.

Functionally, may play a role in DNA repair. It seems to be involved in an RecBC-independent recombinational process of DNA repair. It may act with RecF and RecO. The sequence is that of Recombination protein RecR from Shewanella sediminis (strain HAW-EB3).